A 374-amino-acid chain; its full sequence is Ribosomal RNA large subunit methyltransferase G (374 aa).

It belongs to the methyltransferase superfamily. RlmG family.

The protein resides in the cytoplasm. The catalysed reaction is guanosine(1835) in 23S rRNA + S-adenosyl-L-methionine = N(2)-methylguanosine(1835) in 23S rRNA + S-adenosyl-L-homocysteine + H(+). Its function is as follows. Specifically methylates the guanine in position 1835 (m2G1835) of 23S rRNA. The chain is Ribosomal RNA large subunit methyltransferase G from Ectopseudomonas mendocina (strain ymp) (Pseudomonas mendocina).